We begin with the raw amino-acid sequence, 176 residues long: Nucleoside triphosphate/diphosphate phosphatase (176 aa).

Arginine 23 serves as the catalytic Proton donor. Residues asparagine 87, aspartate 103, aspartate 105, aspartate 107, aspartate 120, and glutamate 123 each contribute to the Mg(2+) site.

The protein belongs to the Ntdp family. Requires Mg(2+) as cofactor.

The catalysed reaction is a ribonucleoside 5'-triphosphate + H2O = a ribonucleoside 5'-diphosphate + phosphate + H(+). The enzyme catalyses a ribonucleoside 5'-diphosphate + H2O = a ribonucleoside 5'-phosphate + phosphate + H(+). Has nucleoside phosphatase activity towards nucleoside triphosphates and nucleoside diphosphates. The polypeptide is Nucleoside triphosphate/diphosphate phosphatase (Bacillus mycoides (strain KBAB4) (Bacillus weihenstephanensis)).